A 270-amino-acid polypeptide reads, in one-letter code: Urease accessory protein UreD (270 aa).

This sequence belongs to the UreD family. As to quaternary structure, ureD, UreF and UreG form a complex that acts as a GTP-hydrolysis-dependent molecular chaperone, activating the urease apoprotein by helping to assemble the nickel containing metallocenter of UreC. The UreE protein probably delivers the nickel.

The protein resides in the cytoplasm. Required for maturation of urease via the functional incorporation of the urease nickel metallocenter. The chain is Urease accessory protein UreD from Actinobacillus pleuropneumoniae serotype 3 (strain JL03).